The primary structure comprises 317 residues: Melanocyte-stimulating hormone receptor (317 aa).

The Extracellular segment spans residues Met-1–Glu-37. A glycan (N-linked (GlcNAc...) asparagine) is linked at Asn-29. A helical transmembrane segment spans residues Val-38–Ile-63. The Cytoplasmic segment spans residues Ala-64 to Pro-72. Residues Met-73 to Leu-93 form a helical membrane-spanning segment. The Extracellular portion of the chain corresponds to Glu-94–Asn-118. A helical membrane pass occupies residues Val-119–Val-140. The Cytoplasmic segment spans residues Asp-141–Arg-163. The chain crosses the membrane as a helical span at residues Val-164–Tyr-183. Over Asp-184–Cys-191 the chain is Extracellular. A helical membrane pass occupies residues Leu-192–Leu-211. Over Ala-212–Ala-240 the chain is Cytoplasmic. A helical transmembrane segment spans residues Ala-241–Leu-266. Over Cys-267–Asn-279 the chain is Extracellular. A helical membrane pass occupies residues Phe-280 to Phe-300. Topologically, residues Arg-301–Trp-317 are cytoplasmic. A lipid anchor (S-palmitoyl cysteine) is attached at Cys-315.

This sequence belongs to the G-protein coupled receptor 1 family. Interacts with MGRN1, but does not undergo MGRN1-mediated ubiquitination; this interaction competes with GNAS-binding and thus inhibits agonist-induced cAMP production. Interacts with OPN3; the interaction results in a decrease in MC1R-mediated cAMP signaling and ultimately a decrease in melanin production in melanocytes.

It localises to the cell membrane. In terms of biological role, receptor for MSH (alpha, beta and gamma) and ACTH. The activity of this receptor is mediated by G proteins which activate adenylate cyclase. Mediates melanogenesis, the production of eumelanin (black/brown) and phaeomelanin (red/yellow), via regulation of cAMP signaling in melanocytes. This chain is Melanocyte-stimulating hormone receptor (MC1R), found in Colobus guereza (Mantled guereza).